The sequence spans 442 residues: Histidine--tRNA ligase (442 aa).

This sequence belongs to the class-II aminoacyl-tRNA synthetase family. As to quaternary structure, homodimer.

The protein resides in the cytoplasm. The enzyme catalyses tRNA(His) + L-histidine + ATP = L-histidyl-tRNA(His) + AMP + diphosphate + H(+). The polypeptide is Histidine--tRNA ligase (Helicobacter pylori (strain G27)).